Here is a 92-residue protein sequence, read N- to C-terminus: Cell division protein FtsB (92 aa).

Topologically, residues 1-3 are cytoplasmic; it reads MRL. A helical membrane pass occupies residues 4–21; that stretch reads LILILLSVLVLFQHDFWF. The Periplasmic segment spans residues 22 to 92; the sequence is GSNGFLDYRQ…VFYHIVKESK (71 aa). Residues 28–63 adopt a coiled-coil conformation; the sequence is DYRQNAEKIKENQAENEKLSQRNQRINAEIQGLTKG.

It belongs to the FtsB family. As to quaternary structure, part of a complex composed of FtsB, FtsL and FtsQ.

It localises to the cell inner membrane. Its function is as follows. Essential cell division protein. May link together the upstream cell division proteins, which are predominantly cytoplasmic, with the downstream cell division proteins, which are predominantly periplasmic. This Haemophilus influenzae (strain PittEE) protein is Cell division protein FtsB.